We begin with the raw amino-acid sequence, 103 residues long: Histone H4 (103 aa).

Positions 1–14 (MSGRGKGGKGLGKG) are enriched in gly residues. The disordered stretch occupies residues 1–20 (MSGRGKGGKGLGKGGAKRHR). Ser-2 bears the N-acetylserine mark. At Lys-17 the chain carries N6-acetyllysine. The DNA-binding element occupies 17 to 21 (KRHRR). Lys-80 is modified (N6-methylated lysine).

The protein belongs to the histone H4 family. In terms of assembly, the nucleosome is a histone octamer containing two molecules each of H2A, H2B, H3 and H4 assembled in one H3-H4 heterotetramer and two H2A-H2B heterodimers. The octamer wraps approximately 147 bp of DNA.

It is found in the nucleus. It localises to the chromosome. Its function is as follows. Core component of nucleosome. Nucleosomes wrap and compact DNA into chromatin, limiting DNA accessibility to the cellular machineries which require DNA as a template. Histones thereby play a central role in transcription regulation, DNA repair, DNA replication and chromosomal stability. DNA accessibility is regulated via a complex set of post-translational modifications of histones, also called histone code, and nucleosome remodeling. The sequence is that of Histone H4 from Olisthodiscus luteus (Marine phytoflagellate).